The following is a 457-amino-acid chain: uncharacterized protein (457 aa).

The TRAM domain maps to 5-63 (PVKKNDVIEVEIIDLTHEGLGVAKVDHYPLFIENALPGEKLEIKVLKTGKSFGYGKVLT). S-adenosyl-L-methionine is bound by residues Gln287, Tyr316, Glu337, and Asp385. Cys412 (nucleophile) is an active-site residue.

The protein belongs to the class I-like SAM-binding methyltransferase superfamily. RNA M5U methyltransferase family.

This is an uncharacterized protein from Enterococcus faecalis (strain ATCC 700802 / V583).